We begin with the raw amino-acid sequence, 103 residues long: Large ribosomal subunit protein uL23 (103 aa).

It belongs to the universal ribosomal protein uL23 family. Part of the 50S ribosomal subunit. Contacts protein L29, and trigger factor when it is bound to the ribosome.

Its function is as follows. One of the early assembly proteins it binds 23S rRNA. One of the proteins that surrounds the polypeptide exit tunnel on the outside of the ribosome. Forms the main docking site for trigger factor binding to the ribosome. The sequence is that of Large ribosomal subunit protein uL23 from Chlorobium luteolum (strain DSM 273 / BCRC 81028 / 2530) (Pelodictyon luteolum).